Reading from the N-terminus, the 422-residue chain is NADH-quinone oxidoreductase subunit F (422 aa).

Residues 1–26 (MLKEEDKIFTNLHGQQSHDLKSSKKR) form a disordered region. A compositionally biased stretch (basic and acidic residues) spans 16–26 (QSHDLKSSKKR). An NAD(+)-binding site is contributed by 54 to 63 (GRGGAGFSTG). An FMN-binding site is contributed by 166–213 (GAGAYICGEETALLESLEGKKGMPRLKPPFPAGFGLYGCPTTINNVES). 4 residues coordinate [4Fe-4S] cluster: Cys344, Cys347, Cys350, and Cys390.

Belongs to the complex I 51 kDa subunit family. FMN serves as cofactor. [4Fe-4S] cluster is required as a cofactor.

The catalysed reaction is a quinone + NADH + 5 H(+)(in) = a quinol + NAD(+) + 4 H(+)(out). In terms of biological role, NDH-1 shuttles electrons from NADH, via FMN and iron-sulfur (Fe-S) centers, to quinones in the respiratory chain. Couples the redox reaction to proton translocation (for every two electrons transferred, four hydrogen ions are translocated across the cytoplasmic membrane), and thus conserves the redox energy in a proton gradient. In Rickettsia felis (strain ATCC VR-1525 / URRWXCal2) (Rickettsia azadi), this protein is NADH-quinone oxidoreductase subunit F (nuoF).